We begin with the raw amino-acid sequence, 465 residues long: Argininosuccinate lyase (465 aa).

This sequence belongs to the lyase 1 family. Argininosuccinate lyase subfamily.

Its subcellular location is the cytoplasm. The enzyme catalyses 2-(N(omega)-L-arginino)succinate = fumarate + L-arginine. It functions in the pathway amino-acid biosynthesis; L-arginine biosynthesis; L-arginine from L-ornithine and carbamoyl phosphate: step 3/3. This chain is Argininosuccinate lyase, found in Rhodopseudomonas palustris (strain BisB18).